The chain runs to 337 residues: Eukaryotic translation initiation factor 3 subunit H (337 aa).

In terms of domain architecture, MPN spans 21–153; sequence VQCDGLAVMK…LKAYRLTPQA (133 aa).

This sequence belongs to the eIF-3 subunit H family. Component of the eukaryotic translation initiation factor 3 (eIF-3) complex.

The protein resides in the cytoplasm. Its function is as follows. Component of the eukaryotic translation initiation factor 3 (eIF-3) complex, which is involved in protein synthesis of a specialized repertoire of mRNAs and, together with other initiation factors, stimulates binding of mRNA and methionyl-tRNAi to the 40S ribosome. The eIF-3 complex specifically targets and initiates translation of a subset of mRNAs involved in cell proliferation. The protein is Eukaryotic translation initiation factor 3 subunit H of Bombyx mori (Silk moth).